Here is a 559-residue protein sequence, read N- to C-terminus: Pentatricopeptide repeat-containing protein At2g42920, chloroplastic (559 aa).

The N-terminal 14 residues, 1–14, are a transit peptide targeting the chloroplast; that stretch reads MSPTILSFSGVTVP. PPR repeat units follow at residues 88 to 122, 125 to 159, 160 to 190, 191 to 221, 222 to 256, 257 to 291, 292 to 322, 323 to 357, 358 to 388, and 394 to 424; these read NPFV…SPSV, QRLT…GLED, DSFI…MIGF, DVVA…MPQR, NGVS…DVKP, DGFT…RFEL, NSIV…APKK, QLSC…GLEP, DSVS…MKEK, and SIKH…MPVE. The tract at residues 429–504 is type E motif; the sequence is IWSSLLSACR…EVGCSSIEVD (76 aa). Residues 505 to 535 form a type E(+) motif region; sequence FEVHEFISCGGTHPKSAEIYSLLDILNWDVS.

The protein belongs to the PPR family. PCMP-E subfamily.

The protein resides in the plastid. It localises to the chloroplast. This chain is Pentatricopeptide repeat-containing protein At2g42920, chloroplastic (PCMP-E75), found in Arabidopsis thaliana (Mouse-ear cress).